Consider the following 252-residue polypeptide: Octanoyltransferase (252 aa).

Low complexity predominate over residues 1–21; the sequence is MPSAPAAPAAPAAPDAAASVA. Residues 1–22 are disordered; that stretch reads MPSAPAAPAAPAAPDAAASVAP. Residues 56–237 enclose the BPL/LPL catalytic domain; the sequence is PDTDDEIWVV…RLIAHLDGAT (182 aa). Substrate is bound by residues 96-103, 168-170, and 181-183; these read RGGQITYH, ALG, and GLS. Cys199 serves as the catalytic Acyl-thioester intermediate.

This sequence belongs to the LipB family.

Its subcellular location is the cytoplasm. It carries out the reaction octanoyl-[ACP] + L-lysyl-[protein] = N(6)-octanoyl-L-lysyl-[protein] + holo-[ACP] + H(+). The protein operates within protein modification; protein lipoylation via endogenous pathway; protein N(6)-(lipoyl)lysine from octanoyl-[acyl-carrier-protein]: step 1/2. Its function is as follows. Catalyzes the transfer of endogenously produced octanoic acid from octanoyl-acyl-carrier-protein onto the lipoyl domains of lipoate-dependent enzymes. Lipoyl-ACP can also act as a substrate although octanoyl-ACP is likely to be the physiological substrate. The sequence is that of Octanoyltransferase from Burkholderia pseudomallei (strain 668).